The primary structure comprises 651 residues: MIAAVYTLFFFFLLISSVYSKATISISPQTLNRSGDIVVIKWSGVESPSDLDWLGIYSPPDSPHDHFIGYKFLSDSPTWQSGSGSISLPLTNLRSNYTFRIFHWTQSEINPKHQDHDHNPLPGTRHLLTESNQLNFRFAVNRPEQIHLSYTDNINEMRVVFVTGDGEEREARYGEVKDKLDNIAVARGVRYEIEHMCHAPANSTVGWRDPGWTFDAVMKNLKQGIRYYYQVGSDLKGWSEIHSFVSRNEGSEETLAFMFGDMGCYTPYTTFIRGEEESLSTVKWILRDIEALGDDKPVIVSHIGDISYARGYSWIWDEFFTQIEPIASKVPYHVCIGNHEYDWPNQPWKPDWAAYVYGKDSGGECGVPYSVKFNMPGNSTEATGMVKGPQSRNLYYSYDMGSVHFVYISTETDFLKGGKQYSFLKSDLESVNRSKTPFVVVQGHRPMYTTSRKIRDAAIREKMIEHLEPLLVKNNVTVALWGHVHRYERFCAISNNTCGERWQGNPVHLVIGMAGKDSQPMWEPRANHEDVPIFPQPANSMYRGGEFGYIRLVANKERLTLSYVGNHDGEVHDVVEILASGEVISGSDDGTKDSNFGSESDFAVLWYIEGASVMVVGVIFGYFVGFLSRKKKESGVGSSNRSWIQVKNEET.

The first 20 residues, 1–20 (MIAAVYTLFFFFLLISSVYS), serve as a signal peptide directing secretion. Residues N32, N96, and N202 are each glycosylated (N-linked (GlcNAc...) asparagine). Fe cation is bound by residues D305 and Y308. Position 305 (D305) interacts with Zn(2+). N338 provides a ligand contact to Zn(2+). N338 serves as a coordination point for substrate. Residues N378 and N432 are each glycosylated (N-linked (GlcNAc...) asparagine). H444 is a binding site for Zn(2+). N-linked (GlcNAc...) asparagine glycosylation occurs at N475. H483 is a binding site for Zn(2+). 483–485 (HVH) serves as a coordination point for substrate. Residue H485 participates in Fe cation binding. N-linked (GlcNAc...) asparagine glycans are attached at residues N495 and N640.

The protein belongs to the metallophosphoesterase superfamily. Purple acid phosphatase family. As to quaternary structure, homodimer. The cofactor is Fe cation. It depends on Zn(2+) as a cofactor. Expressed in roots, stems, leaves, flowers and siliques.

The protein localises to the secreted. The sequence is that of Probable inactive purple acid phosphatase 9 (PAP9) from Arabidopsis thaliana (Mouse-ear cress).